The sequence spans 339 residues: tRNA N6-adenosine threonylcarbamoyltransferase (339 aa).

Fe cation contacts are provided by H112 and H116. Residues 135–139, D168, G181, and N273 contribute to the substrate site; that span reads LVSGG. D301 serves as a coordination point for Fe cation.

The protein belongs to the KAE1 / TsaD family. Requires Fe(2+) as cofactor.

It localises to the cytoplasm. It carries out the reaction L-threonylcarbamoyladenylate + adenosine(37) in tRNA = N(6)-L-threonylcarbamoyladenosine(37) in tRNA + AMP + H(+). Required for the formation of a threonylcarbamoyl group on adenosine at position 37 (t(6)A37) in tRNAs that read codons beginning with adenine. Is involved in the transfer of the threonylcarbamoyl moiety of threonylcarbamoyl-AMP (TC-AMP) to the N6 group of A37, together with TsaE and TsaB. TsaD likely plays a direct catalytic role in this reaction. This chain is tRNA N6-adenosine threonylcarbamoyltransferase, found in Coxiella burnetii (strain RSA 493 / Nine Mile phase I).